The following is a 184-amino-acid chain: Probable chemoreceptor glutamine deamidase CheD (184 aa).

The protein belongs to the CheD family.

It catalyses the reaction L-glutaminyl-[protein] + H2O = L-glutamyl-[protein] + NH4(+). Probably deamidates glutamine residues to glutamate on methyl-accepting chemotaxis receptors (MCPs), playing an important role in chemotaxis. The sequence is that of Probable chemoreceptor glutamine deamidase CheD from Rhizobium etli (strain CIAT 652).